The following is a 90-amino-acid chain: MKTAIFTVVLALAVFAVLSFGWEANEKALSEEFTELIHEKEAASETEARECRYFWGECHDPMPCCDWLVCRYKWPITYNICVWNRTFPEK.

The signal sequence occupies residues 1-19 (MKTAIFTVVLALAVFAVLS). The propeptide occupies 20–50 (FGWEANEKALSEEFTELIHEKEAASETEARE). 3 disulfides stabilise this stretch: Cys-51/Cys-65, Cys-58/Cys-70, and Cys-64/Cys-81.

It belongs to the neurotoxin 10 (Hwtx-1) family. 13 (Hntx-13) subfamily. In terms of tissue distribution, expressed by the venom gland.

The protein localises to the secreted. Its function is as follows. Ion channel inhibitor. The sequence is that of U7-theraphotoxin-Hhn1l from Cyriopagopus hainanus (Chinese bird spider).